The primary structure comprises 406 residues: Renin (406 aa).

A signal peptide spans 1–23 (MDGWRRMPRWGLLLLLWGSCTFG). A propeptide spans 24-66 (LPTDTTTFKRIFLKRMPSIRESLKERGVDMARLGPEWSQPMKR) (activation peptide). An N-linked (GlcNAc...) asparagine glycan is attached at Asn-71. A Peptidase A1 domain is found at 86 to 403 (YYGEIGIGTP…DRRNNRIGFA (318 aa)). Residue Asp-104 is part of the active site. Cys-117 and Cys-124 form a disulfide bridge. A glycan (N-linked (GlcNAc...) asparagine) is linked at Asn-141. Cys-283 and Cys-287 form a disulfide bridge. Asp-292 is an active-site residue. Cysteines 325 and 362 form a disulfide.

Belongs to the peptidase A1 family. In terms of assembly, interacts with ATP6AP2.

It is found in the secreted. Its subcellular location is the membrane. It carries out the reaction Cleavage of Leu-|-Xaa bond in angiotensinogen to generate angiotensin I.. Interaction with ATP6AP2 results in a 5-fold increased efficiency in angiotensinogen processing. Functionally, renin is a highly specific endopeptidase, whose only known function is to generate angiotensin I from angiotensinogen in the plasma, initiating a cascade of reactions that produce an elevation of blood pressure and increased sodium retention by the kidney. In Macaca fascicularis (Crab-eating macaque), this protein is Renin (REN).